We begin with the raw amino-acid sequence, 373 residues long: Putative F-box/kelch-repeat protein At2g41360 (373 aa).

The F-box domain maps to 8-54 (WSSLSCLPDEMVLNCLARVPRRYYENISCVSVRLRSLVRTPELYRMR). 2 Kelch repeats span residues 116–162 (EIYF…VFDG) and 163–208 (KIHV…MVSS).

The chain is Putative F-box/kelch-repeat protein At2g41360 from Arabidopsis thaliana (Mouse-ear cress).